The primary structure comprises 182 residues: UPF0397 protein BCA_2731 (182 aa).

Transmembrane regions (helical) follow at residues 9 to 29 (VVAIGIGAALYGILGLWGFSI), 40 to 60 (AILTVFGALFGPVAGLLIGLI), 71 to 91 (WGIWWGWVISSGIIGFAMGLI), 114 to 134 (ITGLIGIVIAIIFAGAFDIIV), and 142 to 162 (IVIQVLGATIADVIVFLVLGL).

This sequence belongs to the UPF0397 family.

The protein resides in the cell membrane. This Bacillus cereus (strain 03BB102) protein is UPF0397 protein BCA_2731.